Consider the following 117-residue polypeptide: Dolichyl-diphosphooligosaccharide--protein glycosyltransferase subunit DAD1 (117 aa).

The Cytoplasmic segment spans residues 1–33 (MAKTSSTTKDAQDLFHAIWSAYSATPTNLKIID). A helical transmembrane segment spans residues 34-54 (LYVVFAVFTALLQDVYMALVG). Residues 55–57 (PFP) lie on the Lumenal side of the membrane. Residues 58 to 78 (FNSFLSGVLSCVGTAVLAVCL) traverse the membrane as a helical segment. The Cytoplasmic segment spans residues 79-96 (RIQVNKENKEFKDLGPER). A helical transmembrane segment spans residues 97 to 117 (AFADFVLCNLVLHLVIMNFLG).

The protein belongs to the DAD/OST2 family. In terms of assembly, component of the oligosaccharyltransferase (OST) complex.

The protein localises to the endoplasmic reticulum membrane. Its pathway is protein modification; protein glycosylation. Subunit of the oligosaccharyl transferase (OST) complex that catalyzes the initial transfer of a defined glycan (Glc(3)Man(9)GlcNAc(2) in eukaryotes) from the lipid carrier dolichol-pyrophosphate to an asparagine residue within an Asn-X-Ser/Thr consensus motif in nascent polypeptide chains, the first step in protein N-glycosylation. N-glycosylation occurs cotranslationally and the complex associates with the Sec61 complex at the channel-forming translocon complex that mediates protein translocation across the endoplasmic reticulum (ER). All subunits are required for a maximal enzyme activity. This chain is Dolichyl-diphosphooligosaccharide--protein glycosyltransferase subunit DAD1 (DAD1), found in Pisum sativum (Garden pea).